The chain runs to 203 residues: Glycerol-3-phosphate acyltransferase (203 aa).

5 helical membrane-spanning segments follow: residues 5–25 (IYIA…GLIL), 55–75 (LAAA…IVAA), 84–104 (IAAN…LFPV), 118–138 (IGVL…MWLA), and 159–179 (IFLW…LTLL).

Belongs to the PlsY family. Probably interacts with PlsX.

The protein resides in the cell inner membrane. The catalysed reaction is an acyl phosphate + sn-glycerol 3-phosphate = a 1-acyl-sn-glycero-3-phosphate + phosphate. It functions in the pathway lipid metabolism; phospholipid metabolism. Functionally, catalyzes the transfer of an acyl group from acyl-phosphate (acyl-PO(4)) to glycerol-3-phosphate (G3P) to form lysophosphatidic acid (LPA). This enzyme utilizes acyl-phosphate as fatty acyl donor, but not acyl-CoA or acyl-ACP. This Rhodopseudomonas palustris (strain ATCC BAA-98 / CGA009) protein is Glycerol-3-phosphate acyltransferase.